A 75-amino-acid polypeptide reads, in one-letter code: Exodeoxyribonuclease 7 small subunit (75 aa).

It belongs to the XseB family. In terms of assembly, heterooligomer composed of large and small subunits.

It localises to the cytoplasm. The enzyme catalyses Exonucleolytic cleavage in either 5'- to 3'- or 3'- to 5'-direction to yield nucleoside 5'-phosphates.. Its function is as follows. Bidirectionally degrades single-stranded DNA into large acid-insoluble oligonucleotides, which are then degraded further into small acid-soluble oligonucleotides. This Chlamydia felis (strain Fe/C-56) (Chlamydophila felis) protein is Exodeoxyribonuclease 7 small subunit.